A 47-amino-acid chain; its full sequence is Protein PsbN (47 aa).

A helical transmembrane segment spans residues Tyr-9–Phe-31.

This sequence belongs to the PsbN family.

Its subcellular location is the cellular thylakoid membrane. Functionally, may play a role in photosystem I and II biogenesis. In Prochlorococcus marinus (strain MIT 9303), this protein is Protein PsbN.